We begin with the raw amino-acid sequence, 409 residues long: MTYPERPLLHLLTRTSLVGQIIVGLIAGLLLASFFPAAALKVGFIGKVFVSALKAVAPVLVFVLVMASIANHRQGQQTHIRPILLLYLVGTFSAAVVAVIASFAFPSSLVLASHPGEMSPPGGIAEVLQSLLLSVVDNPVNALISANFIGILAWAIGLGIAFRHASDTTRNLLSELSNGVSLIVKVVIRFAPLGIFGLVASTFAESGVEALKGYAHLLVVLLGCMLFVAFVVNPLIVFLKIRRNPYPLVLTCLRESGMTAFFTRSSAANIPVNLQLCERLGLHEDTYSVSIPLGATINMAGAAITITVLTLAAVHTLGIAVDVPTAILLSVVASVCACGASGVAGGSLLLIPLACSLFGIPSEVAMQVVAVGFIIAILQDSAETALNSSTDVLFTAAACLAEERKASAA.

9 helical membrane-spanning segments follow: residues 17–37 (LVGQ…FFPA), 49–69 (FVSA…MASI), 83–103 (ILLL…IASF), 142–162 (ALIS…GIAF), 180–200 (VSLI…GLVA), 218–238 (LVVL…LIVF), 301–321 (GAAI…GIAV), 331–351 (VVAS…LLLI), and 357–377 (LFGI…IIAI).

It belongs to the dicarboxylate/amino acid:cation symporter (DAACS) (TC 2.A.23) family.

The protein resides in the cell inner membrane. It carries out the reaction L-serine(in) + Na(+)(in) = L-serine(out) + Na(+)(out). The catalysed reaction is L-threonine(in) + Na(+)(in) = L-threonine(out) + Na(+)(out). Functionally, involved in the import of serine and threonine into the cell, with the concomitant import of sodium (symport system). The protein is Serine/threonine transporter SstT of Pseudomonas aeruginosa (strain UCBPP-PA14).